Consider the following 951-residue polypeptide: AP-1 complex subunit beta-1 (951 aa).

At K318 the chain carries N6-acetyllysine. Position 574 is a 3'-nitrotyrosine (Y574).

It belongs to the adaptor complexes large subunit family. In terms of assembly, adaptor protein complex 1 (AP-1) is a heterotetramer composed of two large adaptins (gamma-type subunit AP1G1 and beta-type subunit AP1B1), a medium adaptin (mu-type subunit AP1M1 or AP1M2) and a small adaptin (sigma-type subunit AP1S1 or AP1S2 or AP1S3).

The protein resides in the cytoplasmic vesicle. The protein localises to the clathrin-coated vesicle membrane. Its subcellular location is the golgi apparatus. In terms of biological role, subunit of clathrin-associated adaptor protein complex 1 that plays a role in protein sorting in the late-Golgi/trans-Golgi network (TGN) and/or endosomes. The AP complexes mediate both the recruitment of clathrin to membranes and the recognition of sorting signals within the cytosolic tails of transmembrane cargo molecules. This is AP-1 complex subunit beta-1 (AP2B1) from Bos taurus (Bovine).